The sequence spans 201 residues: ATP-dependent Clp protease proteolytic subunit 2 (201 aa).

The Nucleophile role is filled by Ser100. His125 is an active-site residue.

This sequence belongs to the peptidase S14 family. In terms of assembly, fourteen ClpP subunits assemble into 2 heptameric rings which stack back to back to give a disk-like structure with a central cavity, resembling the structure of eukaryotic proteasomes.

Its subcellular location is the cytoplasm. It carries out the reaction Hydrolysis of proteins to small peptides in the presence of ATP and magnesium. alpha-casein is the usual test substrate. In the absence of ATP, only oligopeptides shorter than five residues are hydrolyzed (such as succinyl-Leu-Tyr-|-NHMec, and Leu-Tyr-Leu-|-Tyr-Trp, in which cleavage of the -Tyr-|-Leu- and -Tyr-|-Trp bonds also occurs).. In terms of biological role, cleaves peptides in various proteins in a process that requires ATP hydrolysis. Has a chymotrypsin-like activity. Plays a major role in the degradation of misfolded proteins. The chain is ATP-dependent Clp protease proteolytic subunit 2 from Corynebacterium glutamicum (strain ATCC 13032 / DSM 20300 / JCM 1318 / BCRC 11384 / CCUG 27702 / LMG 3730 / NBRC 12168 / NCIMB 10025 / NRRL B-2784 / 534).